The following is a 99-amino-acid chain: UPF0235 protein ASA_3628 (99 aa).

This sequence belongs to the UPF0235 family.

The polypeptide is UPF0235 protein ASA_3628 (Aeromonas salmonicida (strain A449)).